A 341-amino-acid chain; its full sequence is tRNA N6-adenosine threonylcarbamoyltransferase (341 aa).

His-120 and His-124 together coordinate Fe cation. Residues 142–146 (VVSGG), Asp-175, Gly-188, Asp-192, and Asn-281 contribute to the substrate site. Asp-310 contributes to the Fe cation binding site.

The protein belongs to the KAE1 / TsaD family. Fe(2+) is required as a cofactor.

The protein resides in the cytoplasm. It catalyses the reaction L-threonylcarbamoyladenylate + adenosine(37) in tRNA = N(6)-L-threonylcarbamoyladenosine(37) in tRNA + AMP + H(+). Its function is as follows. Required for the formation of a threonylcarbamoyl group on adenosine at position 37 (t(6)A37) in tRNAs that read codons beginning with adenine. Is involved in the transfer of the threonylcarbamoyl moiety of threonylcarbamoyl-AMP (TC-AMP) to the N6 group of A37, together with TsaE and TsaB. TsaD likely plays a direct catalytic role in this reaction. The protein is tRNA N6-adenosine threonylcarbamoyltransferase of Anoxybacillus flavithermus (strain DSM 21510 / WK1).